The primary structure comprises 162 residues: UPF0114 protein PA4574 (162 aa).

The next 3 membrane-spanning stretches (helical) occupy residues 10–32 (YASR…ALTI), 53–75 (LILV…MVMI), and 136–156 (LMWY…MGYL).

This sequence belongs to the UPF0114 family.

The protein resides in the cell membrane. The sequence is that of UPF0114 protein PA4574 from Pseudomonas aeruginosa (strain ATCC 15692 / DSM 22644 / CIP 104116 / JCM 14847 / LMG 12228 / 1C / PRS 101 / PAO1).